Reading from the N-terminus, the 1409-residue chain is Mediator of RNA polymerase II transcription subunit 23 (1409 aa).

The disordered stretch occupies residues alanine 1359–glutamine 1409.

Belongs to the Mediator complex subunit 23 family. Component of the Mediator complex.

It localises to the nucleus. Functionally, component of the Mediator complex, a coactivator involved in the regulated transcription of nearly all RNA polymerase II-dependent genes. Mediator functions as a bridge to convey information from gene-specific regulatory proteins to the basal RNA polymerase II transcription machinery. Mediator is recruited to promoters by direct interactions with regulatory proteins and serves as a scaffold for the assembly of a functional preinitiation complex with RNA polymerase II and the general transcription factors. The polypeptide is Mediator of RNA polymerase II transcription subunit 23 (MED23) (Aedes aegypti (Yellowfever mosquito)).